The sequence spans 78 residues: MTDSIPKKPLKKGSLVFVDRGNYIKSIEALASDNDLPNYVFEGPGEILSVKDEYAQVRWRRPVPDVWFKLDQLKEYIQ.

It belongs to the complex I NdhO subunit family. As to quaternary structure, NDH-1 can be composed of about 15 different subunits; different subcomplexes with different compositions have been identified which probably have different functions.

Its subcellular location is the cellular thylakoid membrane. It catalyses the reaction a plastoquinone + NADH + (n+1) H(+)(in) = a plastoquinol + NAD(+) + n H(+)(out). It carries out the reaction a plastoquinone + NADPH + (n+1) H(+)(in) = a plastoquinol + NADP(+) + n H(+)(out). Functionally, NDH-1 shuttles electrons from an unknown electron donor, via FMN and iron-sulfur (Fe-S) centers, to quinones in the respiratory and/or the photosynthetic chain. The immediate electron acceptor for the enzyme in this species is believed to be plastoquinone. Couples the redox reaction to proton translocation, and thus conserves the redox energy in a proton gradient. Cyanobacterial NDH-1 also plays a role in inorganic carbon-concentration. In Prochlorococcus marinus (strain MIT 9312), this protein is NAD(P)H-quinone oxidoreductase subunit O.